Here is a 96-residue protein sequence, read N- to C-terminus: Glutamyl-tRNA(Gln) amidotransferase subunit C (96 aa).

This sequence belongs to the GatC family. Heterotrimer of A, B and C subunits.

The catalysed reaction is L-glutamyl-tRNA(Gln) + L-glutamine + ATP + H2O = L-glutaminyl-tRNA(Gln) + L-glutamate + ADP + phosphate + H(+). It carries out the reaction L-aspartyl-tRNA(Asn) + L-glutamine + ATP + H2O = L-asparaginyl-tRNA(Asn) + L-glutamate + ADP + phosphate + 2 H(+). Allows the formation of correctly charged Asn-tRNA(Asn) or Gln-tRNA(Gln) through the transamidation of misacylated Asp-tRNA(Asn) or Glu-tRNA(Gln) in organisms which lack either or both of asparaginyl-tRNA or glutaminyl-tRNA synthetases. The reaction takes place in the presence of glutamine and ATP through an activated phospho-Asp-tRNA(Asn) or phospho-Glu-tRNA(Gln). In Neisseria meningitidis serogroup A / serotype 4A (strain DSM 15465 / Z2491), this protein is Glutamyl-tRNA(Gln) amidotransferase subunit C.